The chain runs to 259 residues: Putative hydro-lyase Rxyl_2409 (259 aa).

Positions 1-24 (MGAPGAAEARERIRRGEHAGPTAG) are disordered. Positions 8 to 18 (EARERIRRGEH) are enriched in basic and acidic residues.

It belongs to the D-glutamate cyclase family.

This chain is Putative hydro-lyase Rxyl_2409, found in Rubrobacter xylanophilus (strain DSM 9941 / JCM 11954 / NBRC 16129 / PRD-1).